Consider the following 157-residue polypeptide: Putative glutathione-dependent formaldehyde-activating enzyme (157 aa).

The CENP-V/GFA domain maps to 3–134; it reads LEGSCHCGAV…WVEIESREQD (132 aa). Cys-7, Cys-9, Cys-27, Cys-29, Cys-32, Cys-79, and Cys-82 together coordinate Zn(2+).

The protein belongs to the Gfa family. The cofactor is Zn(2+).

The enzyme catalyses S-(hydroxymethyl)glutathione = glutathione + formaldehyde. The protein operates within one-carbon metabolism; formaldehyde degradation; formate from formaldehyde (glutathione route): step 1/3. In terms of biological role, catalyzes the condensation of formaldehyde and glutathione to S-hydroxymethylglutathione. This Halomonas elongata (strain ATCC 33173 / DSM 2581 / NBRC 15536 / NCIMB 2198 / 1H9) protein is Putative glutathione-dependent formaldehyde-activating enzyme.